The sequence spans 142 residues: Large ribosomal subunit protein uL13 (142 aa).

It belongs to the universal ribosomal protein uL13 family. As to quaternary structure, part of the 50S ribosomal subunit.

This protein is one of the early assembly proteins of the 50S ribosomal subunit, although it is not seen to bind rRNA by itself. It is important during the early stages of 50S assembly. In Pseudomonas putida (strain ATCC 700007 / DSM 6899 / JCM 31910 / BCRC 17059 / LMG 24140 / F1), this protein is Large ribosomal subunit protein uL13.